Consider the following 392-residue polypeptide: DNA polymerase IV (392 aa).

A UmuC domain is found at 6 to 186 (IVHLDADAFF…LPIGKLPGVG (181 aa)). Residues D10 and D103 each coordinate Mg(2+). The active site involves E104.

It belongs to the DNA polymerase type-Y family. Monomer. The cofactor is Mg(2+).

It localises to the cytoplasm. It catalyses the reaction DNA(n) + a 2'-deoxyribonucleoside 5'-triphosphate = DNA(n+1) + diphosphate. In terms of biological role, poorly processive, error-prone DNA polymerase involved in untargeted mutagenesis. Copies undamaged DNA at stalled replication forks, which arise in vivo from mismatched or misaligned primer ends. These misaligned primers can be extended by PolIV. Exhibits no 3'-5' exonuclease (proofreading) activity. May be involved in translesional synthesis, in conjunction with the beta clamp from PolIII. The polypeptide is DNA polymerase IV (Opitutus terrae (strain DSM 11246 / JCM 15787 / PB90-1)).